The primary structure comprises 132 residues: Small ribosomal subunit protein uS9 (132 aa).

It belongs to the universal ribosomal protein uS9 family.

This is Small ribosomal subunit protein uS9 from Leptospira interrogans serogroup Icterohaemorrhagiae serovar copenhageni (strain Fiocruz L1-130).